A 333-amino-acid polypeptide reads, in one-letter code: Glyceraldehyde-3-phosphate dehydrogenase (333 aa).

Residues 11 to 12 (RI), aspartate 35, methionine 79, and serine 121 contribute to the NAD(+) site. D-glyceraldehyde 3-phosphate contacts are provided by residues 150-152 (SCT), threonine 181, 210-211 (TG), and arginine 233. Cysteine 151 acts as the Nucleophile in catalysis. Asparagine 315 lines the NAD(+) pocket.

This sequence belongs to the glyceraldehyde-3-phosphate dehydrogenase family. In terms of assembly, homotetramer.

Its subcellular location is the cytoplasm. The enzyme catalyses D-glyceraldehyde 3-phosphate + phosphate + NAD(+) = (2R)-3-phospho-glyceroyl phosphate + NADH + H(+). Its pathway is carbohydrate degradation; glycolysis; pyruvate from D-glyceraldehyde 3-phosphate: step 1/5. Catalyzes the oxidative phosphorylation of glyceraldehyde 3-phosphate (G3P) to 1,3-bisphosphoglycerate (BPG) using the cofactor NAD. The first reaction step involves the formation of a hemiacetal intermediate between G3P and a cysteine residue, and this hemiacetal intermediate is then oxidized to a thioester, with concomitant reduction of NAD to NADH. The reduced NADH is then exchanged with the second NAD, and the thioester is attacked by a nucleophilic inorganic phosphate to produce BPG. In Bacteroides fragilis (strain YCH46), this protein is Glyceraldehyde-3-phosphate dehydrogenase (gap).